A 510-amino-acid polypeptide reads, in one-letter code: E3 ubiquitin-protein ligase TRIM7 (510 aa).

The segment at 29 to 81 (CSICLEFFREPVSVECGHSFCRACIMRCWERPGAGTGTATRTLPCPLPCPQCR) adopts an RING-type zinc-finger fold. S106 is modified (phosphoserine; by RPS6KA5). The segment at 124-165 (AAAARCSQHGEQLKLYCQDDGRAICVVCDRAREHRSHAVLPL) adopts a B box-type zinc-finger fold. The Zn(2+) site is built by C129, H132, C151, and H157. Residues 165 to 275 (LEEAVQEAKE…SGQIQETAQK (111 aa)) are a coiled coil. The 188-residue stretch at 323 to 510 (LLKKFKEDLQ…STGTYLRIWP (188 aa)) folds into the B30.2/SPRY domain.

It belongs to the TRIM/RBCC family. In terms of assembly, forms homodimers. Interacts with GNIP2. Interacts with GYG1. Interacts with RNF187 (via C-terminus). Phosphorylated at Ser-106 by RPS6KA5/MSK1, which stimulates the ubiquitin ligase activity. Post-translationally, auto-ubiquitinates via 'Lys-63'-linked polyubiquitination. As to expression, highly expressed in antigen-presenting cells.

It localises to the nucleus. Its subcellular location is the cytoplasm. It is found in the golgi apparatus. The enzyme catalyses S-ubiquitinyl-[E2 ubiquitin-conjugating enzyme]-L-cysteine + [acceptor protein]-L-lysine = [E2 ubiquitin-conjugating enzyme]-L-cysteine + N(6)-ubiquitinyl-[acceptor protein]-L-lysine.. It participates in protein modification; protein ubiquitination. Its function is as follows. E3 ubiquitin-protein ligase that have both tumor-promoting and tumor-suppressing activities and functions in several biological processes including innate immunity, regulation of ferroptosis as well as cell proliferation and migration. Acts as an antiviral effector against multiple viruses by targeting specific viral proteins for ubiquitination and degradation including norovirus NTPase protein. Mechanistically, recognizes the C-terminal glutamine-containing motif generated by viral proteases that process the polyproteins and trigger their ubiquitination and subsequent degradation. Mediates 'Lys-63'-linked polyubiquitination and stabilization of the JUN coactivator RNF187 in response to growth factor signaling via the MEK/ERK pathway, thereby regulating JUN transactivation and cellular proliferation. Promotes the TLR4-mediated signaling activation through its E3 ligase domain leading to production of pro-inflammatory cytokines and type I interferon. Also plays a negative role in the regulation of exogenous cytosolic DNA virus-triggered immune response. Mechanistically, enhances the 'Lys-48'-linked ubiquitination of STING1 leading to its proteasome-dependent degradation. Mediates the ubiquitination of the SIN3-HDAC chromatin remodeling complex component BRMS1. Modulates NCOA4-mediated ferritinophagy and ferroptosis in glioblastoma cells by ubiquitinating NCOA4, leading to its degradation. This chain is E3 ubiquitin-protein ligase TRIM7 (Trim7), found in Mus musculus (Mouse).